Reading from the N-terminus, the 136-residue chain is Transmembrane protein 203 (136 aa).

An interaction with STING1 region spans residues Met1–Val51. Helical transmembrane passes span Phe14–Ala34, Phe50–Phe72, Val81–Leu101, and Leu112–Ala132. Residues Pro52–Asn136 form a required for the lysosomal localization of the STING-TMEM203 complex region.

As to quaternary structure, homodimer. Interacts with ATP2A2, ITPR3 and STIM1. Interacts with STING1 (via transmembrane domain). As to expression, increased expression seen in T-lymphocytes from patients with systemic lupus erythematosus (SLE).

It is found in the endoplasmic reticulum membrane. The protein resides in the endoplasmic reticulum-Golgi intermediate compartment. The protein localises to the lysosome membrane. Involved in the regulation of cellular calcium homeotasis. Required for spermatogenesis. Acts as a regulator of STING-mediated inflammatory signaling in macrophages. Forms a complex with STING, promoting the activity of TBK1 kinase and the transcription factor IRF3, leading to activation of type I interferon expression. The protein is Transmembrane protein 203 (TMEM203) of Homo sapiens (Human).